Consider the following 821-residue polypeptide: KN motif and ankyrin repeat domain-containing protein 3 (821 aa).

A compositionally biased stretch (polar residues) spans 1–10 (MAKFALNQNL). Disordered stretches follow at residues 1 to 36 (MAKF…PYSV), 58 to 184 (GPAA…AQLQ), 224 to 333 (LLAG…APET), and 385 to 547 (AAEE…GRCE). A compositionally biased stretch (low complexity) spans 77–88 (RPGLAGARSPGA). The segment covering 128–150 (PRVEHTLRETSRRLELAQTHERA) has biased composition (basic and acidic residues). Over residues 151–181 (PSPGRGVPRSPRGSGRSSPAPNLAPASPGPA) the composition is skewed to low complexity. 6 positions are modified to phosphoserine: Ser152, Ser160, Ser164, Ser167, Ser168, and Ser177. A coiled-coil region spans residues 181–230 (AQLQLVREQMAAALRRLRELEDQARTLPELQEQVRALRAEKARLLAGRAQ). A compositionally biased stretch (basic and acidic residues) spans 237-261 (AETRPDKLAQLRRLTERLATSERGG). Residues Ser271, Ser280, and Ser293 each carry the phosphoserine modification. Positions 367-404 (GVSELLRGRLRELEEAREAAEEAAAGARAQLREATTQT) form a coiled coil. Composition is skewed to low complexity over residues 388–400 (EAAA…LREA) and 494–507 (NGGA…SGSG). 5 ANK repeats span residues 622–652 (NGNT…EVNR), 656–690 (AGYS…DVNA), 695–724 (TGQT…DVNA), 728–758 (DGAT…DPAI), and 762–785 (EGTS…LHAH). The disordered stretch occupies residues 784–821 (AHLSSGQPDTQSESPPGSQTATPGEGECGDNGENPQVQ). A compositionally biased stretch (polar residues) spans 787–805 (SSGQPDTQSESPPGSQTAT).

In terms of tissue distribution, strongly expressed in breast, liver, lung, skeletal muscle and kidney.

May be involved in the control of cytoskeleton formation by regulating actin polymerization. The chain is KN motif and ankyrin repeat domain-containing protein 3 from Homo sapiens (Human).